The chain runs to 92 residues: Small ribosomal subunit protein uS15 (92 aa).

Belongs to the universal ribosomal protein uS15 family. In terms of assembly, part of the 30S ribosomal subunit. Forms a bridge to the 50S subunit in the 70S ribosome, contacting the 23S rRNA.

In terms of biological role, one of the primary rRNA binding proteins, it binds directly to 16S rRNA where it helps nucleate assembly of the platform of the 30S subunit by binding and bridging several RNA helices of the 16S rRNA. Forms an intersubunit bridge (bridge B4) with the 23S rRNA of the 50S subunit in the ribosome. The polypeptide is Small ribosomal subunit protein uS15 (Symbiobacterium thermophilum (strain DSM 24528 / JCM 14929 / IAM 14863 / T)).